Here is a 185-residue protein sequence, read N- to C-terminus: Ribosome-recycling factor (185 aa).

This sequence belongs to the RRF family.

The protein localises to the cytoplasm. Responsible for the release of ribosomes from messenger RNA at the termination of protein biosynthesis. May increase the efficiency of translation by recycling ribosomes from one round of translation to another. This Listeria welshimeri serovar 6b (strain ATCC 35897 / DSM 20650 / CCUG 15529 / CIP 8149 / NCTC 11857 / SLCC 5334 / V8) protein is Ribosome-recycling factor.